The primary structure comprises 65 residues: Large ribosomal subunit protein uL29 (65 aa).

It belongs to the universal ribosomal protein uL29 family.

The protein is Large ribosomal subunit protein uL29 of Hyphomonas neptunium (strain ATCC 15444).